A 72-amino-acid polypeptide reads, in one-letter code: ATP-dependent Clp protease ATP-binding subunit ClpA homolog (72 aa).

Belongs to the ClpA/ClpB family.

The protein localises to the plastid. It is found in the chloroplast. Its function is as follows. May interact with a ClpP-like protease involved in degradation of denatured proteins in the chloroplast. The sequence is that of ATP-dependent Clp protease ATP-binding subunit ClpA homolog from Populus euphratica (Euphrates poplar).